The following is a 103-amino-acid chain: Putative glutaredoxin-C14 (103 aa).

In terms of domain architecture, Glutaredoxin spans 1–102 (MDRVMKLASE…PMLKNAGALW (102 aa)). C21 and C24 are oxidised to a cystine. The Responsive for interaction with TGA factors motif lies at 100-103 (ALWL).

Belongs to the glutaredoxin family. CC-type subfamily.

Its subcellular location is the cytoplasm. The protein resides in the nucleus. In terms of biological role, has a glutathione-disulfide oxidoreductase activity in the presence of NADPH and glutathione reductase. Reduces low molecular weight disulfides and proteins. This chain is Putative glutaredoxin-C14 (GRXC14), found in Oryza sativa subsp. japonica (Rice).